The chain runs to 91 residues: Small ribosomal subunit protein bS20 (91 aa).

The interval 1–28 (MPNIKSAIKRTKTIEKRRAHRASQKSDL) is disordered. A compositionally biased stretch (basic residues) spans 7–23 (AIKRTKTIEKRRAHRAS).

This sequence belongs to the bacterial ribosomal protein bS20 family.

In terms of biological role, binds directly to 16S ribosomal RNA. The chain is Small ribosomal subunit protein bS20 from Brevibacillus brevis (strain 47 / JCM 6285 / NBRC 100599).